The primary structure comprises 196 residues: ATP-dependent Clp protease proteolytic subunit (196 aa).

Serine 98 acts as the Nucleophile in catalysis. Histidine 123 is a catalytic residue.

It belongs to the peptidase S14 family. Fourteen ClpP subunits assemble into 2 heptameric rings which stack back to back to give a disk-like structure with a central cavity, resembling the structure of eukaryotic proteasomes.

It is found in the cytoplasm. The catalysed reaction is Hydrolysis of proteins to small peptides in the presence of ATP and magnesium. alpha-casein is the usual test substrate. In the absence of ATP, only oligopeptides shorter than five residues are hydrolyzed (such as succinyl-Leu-Tyr-|-NHMec, and Leu-Tyr-Leu-|-Tyr-Trp, in which cleavage of the -Tyr-|-Leu- and -Tyr-|-Trp bonds also occurs).. Cleaves peptides in various proteins in a process that requires ATP hydrolysis. Has a chymotrypsin-like activity. Plays a major role in the degradation of misfolded proteins. This is ATP-dependent Clp protease proteolytic subunit from Geobacillus thermodenitrificans (strain NG80-2).